We begin with the raw amino-acid sequence, 254 residues long: Homeobox protein Nkx-6.3 (254 aa).

Disordered regions lie at residues 112–140 (QDWR…RPTF) and 191–228 (KSAV…DPDS). Residues 120 to 129 (ALSSASNTEG) show a composition bias toward polar residues. A DNA-binding region (homeobox) is located at residues 133–192 (KKHTRPTFTGHQIFALEKTFEQTKYLAGPERARLAFSLGMSESQVKVWFQNRRTKWRKKS).

It localises to the nucleus. In terms of biological role, putative transcription factor, which may be involved in patterning of central nervous system and pancreas. This Xenopus laevis (African clawed frog) protein is Homeobox protein Nkx-6.3 (nkx6-3).